The sequence spans 152 residues: Ubiquitin-conjugating enzyme E2 1 (152 aa).

In terms of domain architecture, UBC core spans P4–T150. The active-site Glycyl thioester intermediate is the C88. A disordered region spans residues N119 to D152. Residues S131–V145 show a composition bias toward basic and acidic residues.

Belongs to the ubiquitin-conjugating enzyme family. In terms of tissue distribution, ubiquitously expressed.

The enzyme catalyses S-ubiquitinyl-[E1 ubiquitin-activating enzyme]-L-cysteine + [E2 ubiquitin-conjugating enzyme]-L-cysteine = [E1 ubiquitin-activating enzyme]-L-cysteine + S-ubiquitinyl-[E2 ubiquitin-conjugating enzyme]-L-cysteine.. The protein operates within protein modification; protein ubiquitination. Its function is as follows. Accepts the ubiquitin from the E1 complex and catalyzes its covalent attachment to other proteins. This is Ubiquitin-conjugating enzyme E2 1 (UBC1) from Arabidopsis thaliana (Mouse-ear cress).